Consider the following 336-residue polypeptide: Holliday junction branch migration complex subunit RuvB (336 aa).

The segment at Met-1 to Tyr-182 is large ATPase domain (RuvB-L). ATP is bound by residues Leu-21, Arg-22, Gly-63, Lys-66, Thr-67, Thr-68, Glu-129–Tyr-131, Arg-172, Tyr-182, and Arg-219. Thr-67 contacts Mg(2+). A small ATPAse domain (RuvB-S) region spans residues Thr-183 to Glu-253. The tract at residues Lys-256–Ser-336 is head domain (RuvB-H). Arg-311 and Arg-316 together coordinate DNA.

Belongs to the RuvB family. In terms of assembly, homohexamer. Forms an RuvA(8)-RuvB(12)-Holliday junction (HJ) complex. HJ DNA is sandwiched between 2 RuvA tetramers; dsDNA enters through RuvA and exits via RuvB. An RuvB hexamer assembles on each DNA strand where it exits the tetramer. Each RuvB hexamer is contacted by two RuvA subunits (via domain III) on 2 adjacent RuvB subunits; this complex drives branch migration. In the full resolvosome a probable DNA-RuvA(4)-RuvB(12)-RuvC(2) complex forms which resolves the HJ.

The protein resides in the cytoplasm. The enzyme catalyses ATP + H2O = ADP + phosphate + H(+). Its function is as follows. The RuvA-RuvB-RuvC complex processes Holliday junction (HJ) DNA during genetic recombination and DNA repair, while the RuvA-RuvB complex plays an important role in the rescue of blocked DNA replication forks via replication fork reversal (RFR). RuvA specifically binds to HJ cruciform DNA, conferring on it an open structure. The RuvB hexamer acts as an ATP-dependent pump, pulling dsDNA into and through the RuvAB complex. RuvB forms 2 homohexamers on either side of HJ DNA bound by 1 or 2 RuvA tetramers; 4 subunits per hexamer contact DNA at a time. Coordinated motions by a converter formed by DNA-disengaged RuvB subunits stimulates ATP hydrolysis and nucleotide exchange. Immobilization of the converter enables RuvB to convert the ATP-contained energy into a lever motion, pulling 2 nucleotides of DNA out of the RuvA tetramer per ATP hydrolyzed, thus driving DNA branch migration. The RuvB motors rotate together with the DNA substrate, which together with the progressing nucleotide cycle form the mechanistic basis for DNA recombination by continuous HJ branch migration. Branch migration allows RuvC to scan DNA until it finds its consensus sequence, where it cleaves and resolves cruciform DNA. The protein is Holliday junction branch migration complex subunit RuvB of Lachnoclostridium phytofermentans (strain ATCC 700394 / DSM 18823 / ISDg) (Clostridium phytofermentans).